The following is a 489-amino-acid chain: Putative ABC transporter ATP-binding protein TDE_0282 (489 aa).

ABC transporter domains are found at residues 2-241 (ITLR…SMKL) and 269-487 (FAVK…MQLE). Residues 36 to 43 (GASGCGKT) and 301 to 308 (GENGAGKT) contribute to the ATP site.

This sequence belongs to the ABC transporter superfamily.

The protein localises to the cell inner membrane. Its function is as follows. Probably part of an ABC transporter complex. Responsible for energy coupling to the transport system. The protein is Putative ABC transporter ATP-binding protein TDE_0282 of Treponema denticola (strain ATCC 35405 / DSM 14222 / CIP 103919 / JCM 8153 / KCTC 15104).